The following is a 289-amino-acid chain: MEANVTIPIWQNKPHGAARSVVRRIGTNLPLKPCPRASFETLPNISDLCLKDVPPVPTLADIAWIAADEEETYARVRSDTRPLRHTWKPSPLIVMQRNASVPNLRGSEERLLALKKPALPALSRTTELQDELSHLRSQIAKIVAADAASASLTPDFLSSGSSNVSSPLPCFGSSFHSTTSFVISDITEETEVEVPELPTIPLLCSASPECCKSEHKTTCSSSEEDDCISLSKASSFADMMGILKDFHRIKQSQDLSRSLLKEEDPAVLISEVLRRKFALKEEDISRKGN.

Thr27 carries the post-translational modification Phosphothreonine. Ser38, Ser100, Ser107, Ser221, Ser222, Ser235, Ser258, and Ser270 each carry phosphoserine.

It belongs to the MTFR1 family. Post-translationally, phosphorylated by AMPK. Upon stress, phosphorylation by AMPK is sufficient to induce mitochondrial fragmentation.

It localises to the mitochondrion outer membrane. In terms of biological role, mitochondrial protein required for adaptation of miochondrial dynamics to metabolic changes. Regulates mitochondrial morphology at steady state and mediates AMPK-dependent stress-induced mitochondrial fragmentation via the control of OPA1 levels. The chain is Mitochondrial fission regulator 1-like (Mtfr1l) from Rattus norvegicus (Rat).